The chain runs to 312 residues: Glyoxylate/hydroxypyruvate reductase A (312 aa).

Residue Arg-227 is part of the active site. Residue His-275 is the Proton donor of the active site.

Belongs to the D-isomer specific 2-hydroxyacid dehydrogenase family. GhrA subfamily.

It is found in the cytoplasm. The catalysed reaction is glycolate + NADP(+) = glyoxylate + NADPH + H(+). The enzyme catalyses (R)-glycerate + NAD(+) = 3-hydroxypyruvate + NADH + H(+). It carries out the reaction (R)-glycerate + NADP(+) = 3-hydroxypyruvate + NADPH + H(+). In terms of biological role, catalyzes the NADPH-dependent reduction of glyoxylate and hydroxypyruvate into glycolate and glycerate, respectively. Inactive towards 2-oxo-D-gluconate, 2-oxoglutarate, oxaloacetate and pyruvate. Only D- and L-glycerate are involved in the oxidative activity with NADP. Activity with NAD is very low. The chain is Glyoxylate/hydroxypyruvate reductase A (ghrA) from Escherichia coli (strain K12).